Reading from the N-terminus, the 193-residue chain is dTTP/UTP pyrophosphatase (193 aa).

Asp-77 (proton acceptor) is an active-site residue.

It belongs to the Maf family. YhdE subfamily. The cofactor is a divalent metal cation.

The protein resides in the cytoplasm. The enzyme catalyses dTTP + H2O = dTMP + diphosphate + H(+). It catalyses the reaction UTP + H2O = UMP + diphosphate + H(+). Its function is as follows. Nucleoside triphosphate pyrophosphatase that hydrolyzes dTTP and UTP. May have a dual role in cell division arrest and in preventing the incorporation of modified nucleotides into cellular nucleic acids. In Parabacteroides distasonis (strain ATCC 8503 / DSM 20701 / CIP 104284 / JCM 5825 / NCTC 11152), this protein is dTTP/UTP pyrophosphatase.